The chain runs to 124 residues: Cytochrome c2 (124 aa).

The residue at position 1 (Q1) is a Pyrrolidone carboxylic acid. Residues C15, C18, H19, and M100 each contribute to the heme c site.

Binds 1 heme c group covalently per subunit.

The protein resides in the periplasm. Functionally, cytochrome c2 is found mainly in purple, non-sulfur, photosynthetic bacteria where it functions as the electron donor to the oxidized bacteriochlorophyll in the photophosphorylation pathway. However, it may also have a role in the respiratory chain and is found in some non-photosynthetic bacteria. In Cereibacter sphaeroides (Rhodobacter sphaeroides), this protein is Cytochrome c2 (cycA).